Reading from the N-terminus, the 376-residue chain is Small ribosomal subunit protein uS11m (376 aa).

It belongs to the universal ribosomal protein uS11 family. As to quaternary structure, component of the mitochondrial small ribosomal subunit (mt-SSU). Mature N.crassa 74S mitochondrial ribosomes consist of a small (37S) and a large (54S) subunit. The 37S small subunit contains a 16S ribosomal RNA (16S mt-rRNA) and 32 different proteins. The 54S large subunit contains a 23S rRNA (23S mt-rRNA) and 42 different proteins.

The protein localises to the mitochondrion. In terms of biological role, component of the mitochondrial ribosome (mitoribosome), a dedicated translation machinery responsible for the synthesis of mitochondrial genome-encoded proteins, including at least some of the essential transmembrane subunits of the mitochondrial respiratory chain. The mitoribosomes are attached to the mitochondrial inner membrane and translation products are cotranslationally integrated into the membrane. The sequence is that of Small ribosomal subunit protein uS11m (mrps18) from Neurospora crassa (strain ATCC 24698 / 74-OR23-1A / CBS 708.71 / DSM 1257 / FGSC 987).